A 237-amino-acid polypeptide reads, in one-letter code: Phosphoribosylaminoimidazole-succinocarboxamide synthase (237 aa).

It belongs to the SAICAR synthetase family.

It carries out the reaction 5-amino-1-(5-phospho-D-ribosyl)imidazole-4-carboxylate + L-aspartate + ATP = (2S)-2-[5-amino-1-(5-phospho-beta-D-ribosyl)imidazole-4-carboxamido]succinate + ADP + phosphate + 2 H(+). The protein operates within purine metabolism; IMP biosynthesis via de novo pathway; 5-amino-1-(5-phospho-D-ribosyl)imidazole-4-carboxamide from 5-amino-1-(5-phospho-D-ribosyl)imidazole-4-carboxylate: step 1/2. The chain is Phosphoribosylaminoimidazole-succinocarboxamide synthase from Edwardsiella ictaluri (strain 93-146).